A 75-amino-acid polypeptide reads, in one-letter code: MFTLKKSLLLLFFLGTISLSLCEEERDADEDEGEMTEEEVKRSVLGTVKDLLIGAGKSAAQSVLTALSCKLSNSC.

The N-terminal stretch at 1-22 (MFTLKKSLLLLFFLGTISLSLC) is a signal peptide. A propeptide spanning residues 23–40 (EEERDADEDEGEMTEEEV) is cleaved from the precursor. Residues C69 and C75 are joined by a disulfide bond.

As to expression, expressed by the skin glands.

It localises to the secreted. In terms of biological role, antimicrobial peptide. The protein is Lividin-3 of Odorrana livida (Green mountain frog).